A 360-amino-acid chain; its full sequence is Casein kinase II subunit alpha (360 aa).

Residues 38–323 (YQLVRKLGRG…AQEAMGHEYF (286 aa)) enclose the Protein kinase domain. ATP is bound by residues 44-52 (LGRGKYSEV) and lysine 67. Aspartate 155 serves as the catalytic Proton acceptor. The segment at 334 to 360 (NGTEQADGQGASNSASSQSSDAKIDGA) is disordered. Low complexity predominate over residues 338–354 (QADGQGASNSASSQSSD).

Belongs to the protein kinase superfamily. Ser/Thr protein kinase family. CK2 subfamily. Tetramer of two alpha and two beta chains. In terms of tissue distribution, expressed in a subset of the adult male sensory neurons: CEM head neurons, ray RnB neurons, and hook HOB tail neurons.

It localises to the cell projection. The protein localises to the axon. The protein resides in the cilium. It is found in the dendrite. Its subcellular location is the perikaryon. The catalysed reaction is L-seryl-[protein] + ATP = O-phospho-L-seryl-[protein] + ADP + H(+). The enzyme catalyses L-threonyl-[protein] + ATP = O-phospho-L-threonyl-[protein] + ADP + H(+). Its function is as follows. Casein kinases are operationally defined by their preferential utilization of acidic proteins such as caseins as substrates. The alpha chain contains the catalytic site. May participate in Wnt signaling. Modulates two aspects of male mating behavior; response to hermaphrodite contact and vulval location, acting in the same pathway as lov-1 and pkd-2. This Caenorhabditis elegans protein is Casein kinase II subunit alpha (kin-3).